The chain runs to 354 residues: DNA polymerase IV 2 (354 aa).

Residues Ile4–Gly184 form the UmuC domain. 2 residues coordinate Mg(2+): Asp8 and Asp102. Glu103 is an active-site residue.

It belongs to the DNA polymerase type-Y family. Monomer. Mg(2+) serves as cofactor.

The protein resides in the cytoplasm. The enzyme catalyses DNA(n) + a 2'-deoxyribonucleoside 5'-triphosphate = DNA(n+1) + diphosphate. Its function is as follows. Poorly processive, error-prone DNA polymerase involved in untargeted mutagenesis. Copies undamaged DNA at stalled replication forks, which arise in vivo from mismatched or misaligned primer ends. These misaligned primers can be extended by PolIV. Exhibits no 3'-5' exonuclease (proofreading) activity. May be involved in translesional synthesis, in conjunction with the beta clamp from PolIII. The protein is DNA polymerase IV 2 (dinB2) of Rhizobium meliloti (strain 1021) (Ensifer meliloti).